We begin with the raw amino-acid sequence, 674 residues long: Methionine--tRNA ligase (674 aa).

A 'HIGH' region motif is present at residues 11-21; sequence PYANGDLHLGH. Cysteine 142, cysteine 145, cysteine 155, and cysteine 158 together coordinate Zn(2+). A 'KMSKS' region motif is present at residues 330 to 334; the sequence is KMSKS. Lysine 333 lines the ATP pocket. A tRNA-binding domain is found at 574–674; sequence DFMKVDLRIA…EGAQPGMRVK (101 aa).

Belongs to the class-I aminoacyl-tRNA synthetase family. MetG type 1 subfamily. As to quaternary structure, homodimer. Requires Zn(2+) as cofactor.

Its subcellular location is the cytoplasm. It carries out the reaction tRNA(Met) + L-methionine + ATP = L-methionyl-tRNA(Met) + AMP + diphosphate. Functionally, is required not only for elongation of protein synthesis but also for the initiation of all mRNA translation through initiator tRNA(fMet) aminoacylation. This Francisella tularensis subsp. holarctica (strain FTNF002-00 / FTA) protein is Methionine--tRNA ligase.